Reading from the N-terminus, the 575-residue chain is 2-isopropylmalate synthase (575 aa).

The region spanning 31-305 is the Pyruvate carboxyltransferase domain; that stretch reads PTWLSTDLRD…APGLDFSDIA (275 aa). Residues Asp-40, His-244, His-246, and Asn-280 each coordinate Mg(2+). The segment at 437-575 is regulatory domain; sequence PVQASPDFSD…RFAGEEQGKG (139 aa).

Belongs to the alpha-IPM synthase/homocitrate synthase family. LeuA type 2 subfamily. Homodimer. It depends on Mg(2+) as a cofactor.

The protein localises to the cytoplasm. The enzyme catalyses 3-methyl-2-oxobutanoate + acetyl-CoA + H2O = (2S)-2-isopropylmalate + CoA + H(+). Its pathway is amino-acid biosynthesis; L-leucine biosynthesis; L-leucine from 3-methyl-2-oxobutanoate: step 1/4. Catalyzes the condensation of the acetyl group of acetyl-CoA with 3-methyl-2-oxobutanoate (2-ketoisovalerate) to form 3-carboxy-3-hydroxy-4-methylpentanoate (2-isopropylmalate). In Herbaspirillum seropedicae (strain SmR1), this protein is 2-isopropylmalate synthase.